Consider the following 994-residue polypeptide: Receptor-like protein 6 (994 aa).

An N-terminal signal peptide occupies residues 1–25; it reads MTGLYSSMSFFLRTIVLLFSTSSFC. Topologically, residues 26-946 are extracellular; sequence NTFASLTQDS…SSSSSSEEDE (921 aa). N-linked (GlcNAc...) asparagine glycosylation is found at asparagine 116, asparagine 134, and asparagine 154. LRR repeat units lie at residues 122 to 146, 148 to 171, 174 to 199, 205 to 228, 230 to 253, 254 to 278, 280 to 301, 302 to 325, 326 to 349, 350 to 373, 375 to 397, 398 to 421, 423 to 445, 446 to 471, 477 to 497, 498 to 520, 521 to 544, 546 to 569, and 571 to 595; these read LQHL…EFSK, MRLE…LLQL, LVSL…LFLH, FMNL…EFSY, WSLR…VLLI, PNLE…LRNN, LLKL…ISNL, KHLT…LRSL, SHLS…VSNL, KQLT…LLNL, QLRY…ISQL, SNLE…LFNI, SLTT…NISL, LHNL…VFLS, SLAL…SEFS, SHLE…IRNQ, RNLS…LWRL, ELST…ALSG, and KIVM…GIQY. N-linked (GlcNAc...) asparagine glycosylation is found at asparagine 277 and asparagine 287. N-linked (GlcNAc...) asparagine glycans are attached at residues asparagine 420, asparagine 435, and asparagine 442. Residue asparagine 489 is glycosylated (N-linked (GlcNAc...) asparagine). Asparagine 522, asparagine 554, and asparagine 561 each carry an N-linked (GlcNAc...) asparagine glycan. One copy of the LRR 20; degenerate repeat lies at 597 to 613; the sequence is LGSYNNFTGYIPPSICG. Asparagine 602 carries N-linked (GlcNAc...) asparagine glycosylation. LRR repeat units follow at residues 614–637, 639–663, 665–687, 689–710, 711–737, 739–762, 803–827, 828–851, 852–875, and 877–900; these read LANP…CLEA, MSSL…FMNA, VLSS…LAGC, ALEI…WLNS, LPKL…VWFG, PLLR…YFMN, LTKY…VGIL, KELH…LANL, TNLE…LGTL, and SLEW…QFHR. An N-linked (GlcNAc...) asparagine glycan is attached at asparagine 649. A glycan (N-linked (GlcNAc...) asparagine) is linked at asparagine 701. An N-linked (GlcNAc...) asparagine glycan is attached at asparagine 762. Asparagine 834 and asparagine 850 each carry an N-linked (GlcNAc...) asparagine glycan. Asparagine 882 and asparagine 902 each carry an N-linked (GlcNAc...) asparagine glycan. Residues 947–967 traverse the membrane as a helical segment; that stretch reads LISWIAACLGFAPGMVFGLTM. Over 968-994 the chain is Cytoplasmic; the sequence is GYIMTSHKHEWFMDTFGRRKGRSTRTR.

The protein belongs to the RLP family.

Its subcellular location is the cell membrane. The protein is Receptor-like protein 6 of Arabidopsis thaliana (Mouse-ear cress).